Here is a 127-residue protein sequence, read N- to C-terminus: MLRTFMHAKLHKARVTEANLHYVGSITIDEDLLDAVGILENEKVQVTNNQNGARIETYAIKGARGSGVICLNGAAARHFQIGDEVIIMAYAQLTNEEIATHVPKVAVLDQENSIKQMLSQEIAHTIL.

Serine 25 serves as the catalytic Schiff-base intermediate with substrate; via pyruvic acid. Serine 25 is subject to Pyruvic acid (Ser). Threonine 57 serves as a coordination point for substrate. The active-site Proton donor is the tyrosine 58. Residue 73–75 (GAA) participates in substrate binding.

Belongs to the PanD family. As to quaternary structure, heterooctamer of four alpha and four beta subunits. Pyruvate is required as a cofactor. In terms of processing, is synthesized initially as an inactive proenzyme, which is activated by self-cleavage at a specific serine bond to produce a beta-subunit with a hydroxyl group at its C-terminus and an alpha-subunit with a pyruvoyl group at its N-terminus.

It is found in the cytoplasm. It carries out the reaction L-aspartate + H(+) = beta-alanine + CO2. It participates in cofactor biosynthesis; (R)-pantothenate biosynthesis; beta-alanine from L-aspartate: step 1/1. Catalyzes the pyruvoyl-dependent decarboxylation of aspartate to produce beta-alanine. This Exiguobacterium sibiricum (strain DSM 17290 / CCUG 55495 / CIP 109462 / JCM 13490 / 255-15) protein is Aspartate 1-decarboxylase.